The sequence spans 1206 residues: MDRSEIVARENPVITQRVTNLLRTNAPLLFMPIDIHEVRYGAYMLFMYGSLENGYKAEVRIENIPVFFDVQIESDNTNQLFLKSLLTAENITYERLESITQRPVMGYREKEKEFAPYIRIFFKSLYERRKAITYLNNMGYNTAADDTTCYYRMVSRELKLPLTSWIQLQNYSYEPRGLVHRFSVTPDDLVSYQDDGLTDHSIVMAYDIETYSPVKGTVPDPNQANDVVFMICMHIFWIHSTEPLASTCITMVPCKKSSEWTTIVCSSEKNLLLSFAEQFSRWVPDICTGFNDSRYDWPFIVEKSMQHGILEEIFNKMSLFWNQKLDTILKCYYVKEKRVKISAEKSIISSFLHTPGCLPMDVRNMCMQIYPKAEKTSLKAFLENCGLDSKVDLPYHLMWKYYETRDSEKMADVAYYCIIDAQRCQDLLVRHNVIPDRREVGILSYTSLYDCIYYAGGHKVCNMLIAYAIHDEYGRIACSTIARGKREHGKYPGAFVIDPIKGLEQDKPTTGLDFASLYPSLIMAYNFSPEKFVASRDEANNLMAKGESLHYVSFHFNNRLVEGWFVRHNNVPDKMGLYPKVLIDLLNKRTILKQELKKLGEKKECIHESHPGFKELQFRHAMVDAKQKALKIFMNTFYGEAGNNLSPFFLLPLAGGVTSSGQYNLKLVYNFVINKGYGIKYGDTDSLYITCPDSLYTEVTEAYLNSQKTIKHYEQLCHEKVLLSMKAMSTLCAEVNEYLRQDNGTSYLRMAYEEVLFPVCFTGKKKYYGIAHVNTPNFNTKELFIRGIDIIKQGQTKLTKTIGMRIMEESMKLRRPEDHRPPLIEIVKTVLKDAVVNMKQWNFEDFIQTDAWRPDKDNKAVQIFMSRMHARREQLKKHGAAASQFAEPEPGERFSYVIVEKQVQFDIQGHRTDTSRKGDKMEYVSEAKAKNLPIDILFYINNYVLGLCARFINENEEFQPPDNVSNKDEYAQRRAKSYLQKFVQSIHPKDKSVIKQGIVHRQCYKYVHQEIKKKIGIFADLYKEFFNNTTNPIESFIQSTQFMIQYSDEEQKVNHSVKKMVEQHATASNRAGNPAGNPAGNPAGNALMRAIFTQLITEEKKIVQALYSKGDEIHDLLTYIINNINYKIATFQTKQMLTFELSSTHVELLLKLNKTWLILTGIHVAKKHLQALLDSYNNEPPSKTFIQQAIKEECSSIKPSCYDFIS.

Tandem repeats lie at residues 1071–1074 (AGNP), 1075–1078 (AGNP), 1079–1082 (AGNP), and 1083–1086 (AGNA). The interval 1071–1086 (AGNPAGNPAGNPAGNA) is 4 X 4 AA tandem repeats of A-G-[NK]-[PA].

The protein belongs to the DNA polymerase type-B family.

The enzyme catalyses DNA(n) + a 2'-deoxyribonucleoside 5'-triphosphate = DNA(n+1) + diphosphate. Its function is as follows. DNA-directed DNA polymerase involved in viral DNA replication. This Ornithodoros (relapsing fever ticks) protein is DNA polymerase beta.